The sequence spans 8545 residues: Nuclear anchorage protein 1 (8545 aa).

Positions 1 to 325 are actin-binding; sequence MSSSPPARPC…VITYVSQFVR (325 aa). The Cytoplasmic portion of the chain corresponds to 1-8494; it reads MSSSPPARPC…QRSRWRRVLR (8494 aa). The Calponin-homology (CH) 1 domain occupies 23–130; that stretch reads KAQKNTFTRW…LIWQIILHFQ (108 aa). Positions 148–197 are disordered; it reads TEEPTSSAQPEVVVTAPSPTPSSKKSHSKVSSLSGSKTSLASGEKAPSSP. A compositionally biased stretch (low complexity) spans 159–190; sequence VVVTAPSPTPSSKKSHSKVSSLSGSKTSLASG. The Calponin-homology (CH) 2 domain maps to 222 to 328; it reads QSVEQVFLRW…YVSQFVRMFG (107 aa). 19 coiled-coil regions span residues 754–774, 1072–1101, 1215–1236, 1324–1384, 1574–1629, 1725–1754, 1950–1981, 2103–2580, 2682–2712, 2852–2949, 3002–3119, 3178–3295, 3346–3417, 3482–3552, 3587–3703, 3781–3839, 3902–4022, 4114–4198, and 4249–4320; these read NIRD…NHSR, SFFQ…LMVH, ADIL…EIQA, DTKK…QFED, RSIE…DLVK, ENRN…YEDA, PAII…NYNQ, DNIE…KKSD, SVKE…KIAK, IMQE…NIGK, DQIV…KTVV, DDEK…DEFK, QLQH…PEND, DELI…EKSL, KAEE…ELLD, ALKA…KEQL, AAHD…KTVV, and LDVA…DEFK. Positions 3010-3019 are enriched in basic and acidic residues; that stretch reads EAEDVTAKES. The tract at residues 3010–3033 is disordered; that stretch reads EAEDVTAKESAKKKKKDKKKSPQE. Repeat copies occupy residues 3241–4143, 4144–5097, 5098–6000, 6001–6903, 6904–7806, and 7807–8199. The tract at residues 3241 to 8199 is 6 X tandem repeat; the sequence is QVAKDIKDSK…TLIPDLEERA (4959 aa). A compositionally biased stretch (basic and acidic residues) spans 3913 to 3922; that stretch reads EAEDVTAKES. Positions 3913–3936 are disordered; sequence EAEDVTAKESAKKKKKDKKKSPQE. Residues 4372–4393 are compositionally biased toward basic and acidic residues; the sequence is ITREDGGDDNKSPDELIDDRGR. Positions 4372–4395 are disordered; it reads ITREDGGDDNKSPDELIDDRGRST. 28 coiled-coil regions span residues 4436 to 4506, 4541 to 4657, 4735 to 4793, 4856 to 4976, 5035 to 5152, 5203 to 5274, 5339 to 5409, 5444 to 5560, 5638 to 5696, 5759 to 5879, 5938 to 6055, 6106 to 6177, 6242 to 6312, 6347 to 6463, 6541 to 6599, 6662 to 6782, 6841 to 6958, 7009 to 7080, 7145 to 7215, 7250 to 7366, 7444 to 7502, 7565 to 7685, 7744 to 7861, 7912 to 7983, 8048 to 8118, 8153 to 8204, 8273 to 8329, and 8370 to 8390; these read DELI…EKSL, KAEE…ELLD, ALKA…KEQL, AAHD…KTVV, DDEK…DEFK, QLQH…PEND, KAEE…IWER, VAED…DINN, and STSI…KEIE. Over residues 4867 to 4876 the composition is skewed to basic and acidic residues; the sequence is EAEDVTAKES. The disordered stretch occupies residues 4867–4890; the sequence is EAEDVTAKESAKKKKKDKKKSPQE. A compositionally biased stretch (basic and acidic residues) spans 5770–5779; that stretch reads EAEDVTAKES. A disordered region spans residues 5770–5793; that stretch reads EAEDVTAKESAKKKKKDKKKSPQE. A compositionally biased stretch (basic and acidic residues) spans 6673–6682; that stretch reads EAEDVTAKES. The tract at residues 6673–6696 is disordered; sequence EAEDVTAKESAKKKKKDKKKSPQE. Residues 7576-7585 show a composition bias toward basic and acidic residues; it reads EAEDVTAKES. The tract at residues 7576–7599 is disordered; the sequence is EAEDVTAKESAKKKKKDKKKSPQE. Disordered regions lie at residues 8391–8418 and 8449–8480; these read PRLQ…KPYD and SDSE…LSEE. Residues 8401-8411 are compositionally biased toward acidic residues; the sequence is DNEDDEDEEKG. Over residues 8451–8464 the composition is skewed to basic and acidic residues; the sequence is SESRSEFDSLDSRS. In terms of domain architecture, KASH spans 8486–8545; that stretch reads RSRWRRVLRTALPLQALLVLLMGAACLVPHCDDEYCCQLLNNFAKSFDPSLEFVNGPPPF. A helical; Anchor for type IV membrane protein transmembrane segment spans residues 8495-8513; the sequence is TALPLQALLVLLMGAACLV. Over 8514–8545 the chain is Perinuclear space; that stretch reads PHCDDEYCCQLLNNFAKSFDPSLEFVNGPPPF.

Belongs to the nesprin family. As to quaternary structure, interacts with F-actin via its N-terminal domain. Most likely interacts with unc-84; the interaction is probably required to recruit anc-1 to the nuclear envelope. Ubiquitously expressed in all postembryonic cells.

The protein localises to the nucleus outer membrane. Its subcellular location is the cytoplasm. It localises to the cytoskeleton. Its function is as follows. Plays a central role in nuclear and mitochondrial anchoring. Probably connects nuclei to the cytoskeleton by interacting with unc-84 at the nuclear envelope and with F-actin in the cytoplasm, creating a bridge across the nuclear envelope between the cytoskeleton and the nucleus. Has a role in positioning of the cell body of the PVQ lumbar interneuron. The chain is Nuclear anchorage protein 1 from Caenorhabditis elegans.